The following is a 182-amino-acid chain: Large ribosomal subunit protein uL16 (182 aa).

This sequence belongs to the universal ribosomal protein uL16 family. As to quaternary structure, part of the 50S ribosomal subunit.

This is Large ribosomal subunit protein uL16 from Thermococcus kodakarensis (strain ATCC BAA-918 / JCM 12380 / KOD1) (Pyrococcus kodakaraensis (strain KOD1)).